The primary structure comprises 440 residues: tRNA-2-methylthio-N(6)-dimethylallyladenosine synthase (440 aa).

Residues Pro2–Gly118 form the MTTase N-terminal domain. 6 residues coordinate [4Fe-4S] cluster: Cys11, Cys47, Cys81, Cys155, Cys159, and Cys162. A Radical SAM core domain is found at Arg141–Glu370. The region spanning Leu373–Arg436 is the TRAM domain.

Belongs to the methylthiotransferase family. MiaB subfamily. In terms of assembly, monomer. It depends on [4Fe-4S] cluster as a cofactor.

It is found in the cytoplasm. It catalyses the reaction N(6)-dimethylallyladenosine(37) in tRNA + (sulfur carrier)-SH + AH2 + 2 S-adenosyl-L-methionine = 2-methylsulfanyl-N(6)-dimethylallyladenosine(37) in tRNA + (sulfur carrier)-H + 5'-deoxyadenosine + L-methionine + A + S-adenosyl-L-homocysteine + 2 H(+). In terms of biological role, catalyzes the methylthiolation of N6-(dimethylallyl)adenosine (i(6)A), leading to the formation of 2-methylthio-N6-(dimethylallyl)adenosine (ms(2)i(6)A) at position 37 in tRNAs that read codons beginning with uridine. In Dictyoglomus thermophilum (strain ATCC 35947 / DSM 3960 / H-6-12), this protein is tRNA-2-methylthio-N(6)-dimethylallyladenosine synthase.